We begin with the raw amino-acid sequence, 247 residues long: Probable transcriptional regulatory protein Hhal_2210 (247 aa).

Belongs to the TACO1 family.

The protein localises to the cytoplasm. This is Probable transcriptional regulatory protein Hhal_2210 from Halorhodospira halophila (strain DSM 244 / SL1) (Ectothiorhodospira halophila (strain DSM 244 / SL1)).